Here is a 142-residue protein sequence, read N- to C-terminus: Galactose-6-phosphate isomerase subunit LacA 2 (142 aa).

This sequence belongs to the LacAB/RpiB family. As to quaternary structure, heteromultimeric protein consisting of LacA and LacB.

The enzyme catalyses aldehydo-D-galactose 6-phosphate = keto-D-tagatose 6-phosphate. It functions in the pathway carbohydrate metabolism; D-galactose 6-phosphate degradation; D-tagatose 6-phosphate from D-galactose 6-phosphate: step 1/1. The protein is Galactose-6-phosphate isomerase subunit LacA 2 of Streptococcus pyogenes serotype M1.